Consider the following 110-residue polypeptide: MTYVCTACKLKFHTFEEFKIHVHLFHPELDKLVEPFPDRKEYRLSIRLDKQTYNMLLNIKNNIQRDNDIGLNTTIKALIYIVNYLLSKGYTIDELTNLPNKVSVIVGGDK.

The C2H2-type zinc finger occupies 3-26 (YVCTACKLKFHTFEEFKIHVHLFH).

This is Putative zinc finger protein ORF110 from Acidianus filamentous virus 1 (isolate United States/Yellowstone) (AFV-1).